The chain runs to 205 residues: ATP phosphoribosyltransferase (205 aa).

This sequence belongs to the ATP phosphoribosyltransferase family. Short subfamily. Heteromultimer composed of HisG and HisZ subunits.

It localises to the cytoplasm. The enzyme catalyses 1-(5-phospho-beta-D-ribosyl)-ATP + diphosphate = 5-phospho-alpha-D-ribose 1-diphosphate + ATP. Its pathway is amino-acid biosynthesis; L-histidine biosynthesis; L-histidine from 5-phospho-alpha-D-ribose 1-diphosphate: step 1/9. Functionally, catalyzes the condensation of ATP and 5-phosphoribose 1-diphosphate to form N'-(5'-phosphoribosyl)-ATP (PR-ATP). Has a crucial role in the pathway because the rate of histidine biosynthesis seems to be controlled primarily by regulation of HisG enzymatic activity. The sequence is that of ATP phosphoribosyltransferase from Leptospira interrogans serogroup Icterohaemorrhagiae serovar Lai (strain 56601).